Consider the following 421-residue polypeptide: Ubiquitin-like modifier-activating enzyme 5 (421 aa).

Glycine 89, aspartate 110, lysine 133, asparagine 156, and asparagine 191 together coordinate ATP. Zn(2+)-binding residues include cysteine 233 and cysteine 236. Residue cysteine 257 is the Glycyl thioester intermediate of the active site. The Zn(2+) site is built by cysteine 310 and cysteine 315.

This sequence belongs to the ubiquitin-activating E1 family. UBA5 subfamily.

In terms of biological role, E1-like enzyme which activates UFM1. This Oryza sativa subsp. japonica (Rice) protein is Ubiquitin-like modifier-activating enzyme 5.